We begin with the raw amino-acid sequence, 192 residues long: Intraflagellar transport protein 22 (192 aa).

GTP contacts are provided by residues 12–19 (GPQRTGKT) and 62–69 (WDVSGSVQ).

This sequence belongs to the small GTPase superfamily. Rab family. As to quaternary structure, component of the IFT complex B, composed of IFT88, IFT70, IFT52, IFT46, IFT27, IFT25 and IFT22.

It localises to the cell projection. The protein resides in the cilium. It is found in the flagellum. Functionally, component of the intraflagellar transport (IFT) complex B. Functions in regulating the cellular pool size of both complex A and complex B and thus plays a critical role in determining the cellular availability of IFT particles. The polypeptide is Intraflagellar transport protein 22 (FAP9) (Chlamydomonas reinhardtii (Chlamydomonas smithii)).